The sequence spans 521 residues: Glucose-1-phosphate adenylyltransferase large subunit 2, chloroplastic/amyloplastic (521 aa).

The N-terminal 47 residues, 1–47 (MQFSSVLPLEGKACMSPVRRGSGGYGSERMRINCCSIRRNKALRRMC), are a transit peptide targeting the chloroplast.

It belongs to the bacterial/plant glucose-1-phosphate adenylyltransferase family. As to quaternary structure, heterotetramer. Abundant in the embryo and is also present in the endosperm.

Its subcellular location is the plastid. It is found in the chloroplast. It localises to the amyloplast. The catalysed reaction is alpha-D-glucose 1-phosphate + ATP + H(+) = ADP-alpha-D-glucose + diphosphate. The protein operates within glycan biosynthesis; starch biosynthesis. With respect to regulation, activated by 3'phosphoglycerate, inhibited by orthophosphate. Allosteric regulation. Its function is as follows. This protein plays a role in synthesis of starch. It catalyzes the synthesis of the activated glycosyl donor, ADP-glucose from Glc-1-P and ATP. This Zea mays (Maize) protein is Glucose-1-phosphate adenylyltransferase large subunit 2, chloroplastic/amyloplastic (AGP2).